A 419-amino-acid chain; its full sequence is UDP-N-acetylglucosamine 1-carboxyvinyltransferase (419 aa).

Residue 22–23 participates in phosphoenolpyruvate binding; the sequence is KN. A UDP-N-acetyl-alpha-D-glucosamine-binding site is contributed by arginine 92. The active-site Proton donor is cysteine 116. The residue at position 116 (cysteine 116) is a 2-(S-cysteinyl)pyruvic acid O-phosphothioketal. UDP-N-acetyl-alpha-D-glucosamine contacts are provided by residues 121–125, aspartate 306, and isoleucine 328; that span reads RPIDL.

It belongs to the EPSP synthase family. MurA subfamily.

It is found in the cytoplasm. The catalysed reaction is phosphoenolpyruvate + UDP-N-acetyl-alpha-D-glucosamine = UDP-N-acetyl-3-O-(1-carboxyvinyl)-alpha-D-glucosamine + phosphate. Its pathway is cell wall biogenesis; peptidoglycan biosynthesis. Its function is as follows. Cell wall formation. Adds enolpyruvyl to UDP-N-acetylglucosamine. Target for the antibiotic fosfomycin. The chain is UDP-N-acetylglucosamine 1-carboxyvinyltransferase from Streptococcus pneumoniae (strain Hungary19A-6).